A 584-amino-acid chain; its full sequence is MNNHIEALSYYLGAFVDELTRLNVCDVVISPGSRSTPIALLMEQHEGMNTYLHVDERSAGFFALGIAKAKKRPVALLCTSGTAAANYYPAVCEAFHSRVPLIVLTADRPHELRDVGAPQAMNQFNLYGTFVKQFTEMALPEASEAMYHYARMTTQRMIASACLAPQGPVHLNFPVREPLIPDFSLESLWDKGRGEYTGVVQQGNVVMPSEYVDSLVGRLSHMEKGLIICGDDSHSEIAAFATQLAEKTGYPILADPLSNIRSGHHDKTMVIDCYDTFLRNELLKETWKPDVLIRFGGMPVSKALTQFIKKQTKAVHIVVDESGQWRDPALVATEVVQASDIAFCSALIEKMPVMKKNDWFRMWQHINEKTKETLREMETYDTAFEGRVITDIVRVLPEGATLFASNSMPIRDTDSFFFTSDKNIQVMANRGVNGIDGIISTALGASIICDPLVLVIGDLSFYHDLNGLLAAKLHELNITIVVVNNDGGGIFSFLPQYEKKEHFESLFGTPIGLDYEHVVTMYGGSFSRVNGWEQFREEVQKGATTEGLHVVEICTNRDENLTLHRTLWAKTQDVITTSLQGESK.

The protein belongs to the TPP enzyme family. MenD subfamily. In terms of assembly, homodimer. Requires Mg(2+) as cofactor. The cofactor is Mn(2+). It depends on thiamine diphosphate as a cofactor.

It catalyses the reaction isochorismate + 2-oxoglutarate + H(+) = 5-enolpyruvoyl-6-hydroxy-2-succinyl-cyclohex-3-ene-1-carboxylate + CO2. It participates in quinol/quinone metabolism; 1,4-dihydroxy-2-naphthoate biosynthesis; 1,4-dihydroxy-2-naphthoate from chorismate: step 2/7. Its pathway is quinol/quinone metabolism; menaquinone biosynthesis. Catalyzes the thiamine diphosphate-dependent decarboxylation of 2-oxoglutarate and the subsequent addition of the resulting succinic semialdehyde-thiamine pyrophosphate anion to isochorismate to yield 2-succinyl-5-enolpyruvyl-6-hydroxy-3-cyclohexene-1-carboxylate (SEPHCHC). This is 2-succinyl-5-enolpyruvyl-6-hydroxy-3-cyclohexene-1-carboxylate synthase from Bacillus cereus (strain ZK / E33L).